The primary structure comprises 339 residues: Anthranilate phosphoribosyltransferase (339 aa).

Residues Gly81, Gly84–Asp85, Ser89, Asn91–Thr94, Lys109–Ser117, and Ala121 each bind 5-phospho-alpha-D-ribose 1-diphosphate. Residue Gly81 participates in anthranilate binding. Position 93 (Ser93) interacts with Mg(2+). Asn112 contributes to the anthranilate binding site. Arg167 is an anthranilate binding site. Mg(2+) contacts are provided by Asp226 and Glu227.

Belongs to the anthranilate phosphoribosyltransferase family. Homodimer. Mg(2+) is required as a cofactor.

It catalyses the reaction N-(5-phospho-beta-D-ribosyl)anthranilate + diphosphate = 5-phospho-alpha-D-ribose 1-diphosphate + anthranilate. The protein operates within amino-acid biosynthesis; L-tryptophan biosynthesis; L-tryptophan from chorismate: step 2/5. Catalyzes the transfer of the phosphoribosyl group of 5-phosphorylribose-1-pyrophosphate (PRPP) to anthranilate to yield N-(5'-phosphoribosyl)-anthranilate (PRA). The chain is Anthranilate phosphoribosyltransferase from Rhodopseudomonas palustris (strain BisB18).